Consider the following 1050-residue polypeptide: Collagen alpha-2(I) chain (1050 aa).

The interval 1–1050 (SGGFDFSFLP…FGYEGDFYRA (1050 aa)) is disordered. 4-hydroxyproline occurs at positions 10 and 13. Residues 20–32 (RYYGVGLGPGPMG) are compositionally biased toward gly residues. Composition is skewed to low complexity over residues 33 to 46 (LMGPRGPPGASGAP) and 56 to 77 (EPGEPGQTGPAGARGPPGAPGK). Pro-40 and Pro-46 each carry 4-hydroxyproline. The segment covering 78–92 (AGEDGHPGKPGRPGE) has biased composition (basic and acidic residues). Lys-114 bears the 5-hydroxylysine; alternate mark. Lys-114 is a glycosylation site (O-linked (Gal...) hydroxylysine; alternate). 5 stretches are compositionally biased toward low complexity: residues 161-190 (VGAPGPAGARGSDGSVGPVGPAGPIGSAGP), 236-257 (PGANGLTGAKGAAGLPGVAGAP), 298-311 (EPGSAGPQGPPGSS), 320-338 (NGESGSTGPTGPPGLRGNP), and 355-371 (PAGARGASGPAGVRGPS). Residues Pro-377 and Pro-380 each carry the 4-hydroxyproline modification. Composition is skewed to low complexity over residues 406 to 425 (LPGIDGRPGPIGPAGARGEA) and 452 to 467 (AGNRGAPGPDGNNGAQ). Residues 474-483 (GVQGGKGEQG) show a composition bias toward gly residues. Composition is skewed to low complexity over residues 530–547 (PGESGAVGPSGAIGSRGP), 598–642 (VGTT…PRGS), and 649–669 (VGPAGPNGFAGPAGAAGQPGA). Positions 670–679 (KGERGTKGPK) are enriched in basic and acidic residues. A compositionally biased stretch (low complexity) spans 687–697 (PTGPVGSAGPA). Residues 707–716 (GSRGDGGPPG) are compositionally biased toward gly residues. Positions 718-727 (TGFPGAAGRT) are enriched in low complexity. Gly residues predominate over residues 764–773 (GETGAGGPPG). Low complexity-rich tracts occupy residues 781 to 808 (SGEPGTAGPPGTAGPQGLLGAPGILGLP), 816 to 841 (LPGVAGAVGEPGPLGIAGPPGARGPS), 881 to 903 (YAGNAGPVGAAGAPGPHGTVGPA), and 911 to 926 (EPGPVGSVGPVGALGP). The span at 936-947 (RGDKGEPGDKGP) shows a compositional bias: basic and acidic residues. Pro residues predominate over residues 1020–1032 (SGPPGPPGPPGPP).

It belongs to the fibrillar collagen family. In terms of assembly, trimers of one alpha 2(I) and two alpha 1(I) chains. Interacts (via C-terminus) with TMEM131 (via PapD-L domain); the interaction is direct and is involved in assembly and TRAPPIII ER-to-Golgi transport complex-dependent secretion of collagen. Prolines at the third position of the tripeptide repeating unit (G-X-Y) are hydroxylated in some or all of the chains. In terms of tissue distribution, expressed in bones.

It localises to the secreted. The protein localises to the extracellular space. The protein resides in the extracellular matrix. Type I collagen is a member of group I collagen (fibrillar forming collagen). This Megatherium americanum (Giant ground sloth) protein is Collagen alpha-2(I) chain.